The following is a 387-amino-acid chain: Protein BTN1 (387 aa).

Positions 1-31 (MELDRDKKTFAYFWLFGLINNILYVVILSAA) are cleaved as a signal peptide. Helical transmembrane passes span 43–63 (IVLL…PFFV), 72–92 (IPIL…RSLW), 93–113 (LCLP…ITFL), 129–149 (SGTG…TTVF), 151–171 (LNIQ…LLYY), 225–245 (TVYL…LFPI), 257–276 (YVTY…TWGH), 278–298 (LPVK…LITL), 308–328 (SISW…SSYV), and 347–367 (LGSV…LGII).

Belongs to the battenin family.

It is found in the vacuole membrane. Its function is as follows. Involved in vacuolar transport and vacuole pH homeostasis. Also required for cytokinesis. The polypeptide is Protein BTN1 (BTN1) (Kluyveromyces lactis (strain ATCC 8585 / CBS 2359 / DSM 70799 / NBRC 1267 / NRRL Y-1140 / WM37) (Yeast)).